Consider the following 153-residue polypeptide: MHGREAIEAHYRVAGARMAGLPVYNPALTVELLGWRAVEGVGALGVLITPWCMNLFWQPPADAELPASGERAVLSLPSGDYECTLHEDERLGRHASASLCSPMQDFPGQAEARAMAGEVLRLILAVPEAGPEPSRSGLLSRRALFRRALGGAS.

This sequence belongs to the HupJ family.

This chain is Hydrogenase expression/formation protein HoxT (hoxT), found in Azotobacter vinelandii.